A 636-amino-acid polypeptide reads, in one-letter code: 1,4-alpha-glucan branching enzyme GlgB (636 aa).

Asp-309 serves as the catalytic Nucleophile. The active-site Proton donor is Glu-362.

It belongs to the glycosyl hydrolase 13 family. GlgB subfamily. In terms of assembly, monomer.

The catalysed reaction is Transfers a segment of a (1-&gt;4)-alpha-D-glucan chain to a primary hydroxy group in a similar glucan chain.. The protein operates within glycan biosynthesis; glycogen biosynthesis. Its function is as follows. Catalyzes the formation of the alpha-1,6-glucosidic linkages in glycogen by scission of a 1,4-alpha-linked oligosaccharide from growing alpha-1,4-glucan chains and the subsequent attachment of the oligosaccharide to the alpha-1,6 position. The protein is 1,4-alpha-glucan branching enzyme GlgB of Aromatoleum aromaticum (strain DSM 19018 / LMG 30748 / EbN1) (Azoarcus sp. (strain EbN1)).